The sequence spans 575 residues: uncharacterized protein (575 aa).

Its subcellular location is the cytoplasm. The protein resides in the cytoskeleton. The protein localises to the microtubule organizing center. It localises to the spindle pole body. This is an uncharacterized protein from Schizosaccharomyces pombe (strain 972 / ATCC 24843) (Fission yeast).